Reading from the N-terminus, the 296-residue chain is Glycine--tRNA ligase alpha subunit (296 aa).

It belongs to the class-II aminoacyl-tRNA synthetase family. In terms of assembly, tetramer of two alpha and two beta subunits.

It is found in the cytoplasm. It carries out the reaction tRNA(Gly) + glycine + ATP = glycyl-tRNA(Gly) + AMP + diphosphate. The polypeptide is Glycine--tRNA ligase alpha subunit (Listeria monocytogenes serotype 4a (strain HCC23)).